The sequence spans 319 residues: DNA-directed RNA polymerases II, IV and V subunit 3 (319 aa).

Met-1 carries the N-acetylmethionine modification.

The protein belongs to the archaeal Rpo3/eukaryotic RPB3 RNA polymerase subunit family. As to quaternary structure, component of the RNA polymerase II complex consisting of at least 12 subunits. Interacts with SHH1, CLSY1, NRPB11 and NRPD1. Interacts with IYO.

It is found in the nucleus. In terms of biological role, DNA-dependent RNA polymerase catalyzes the transcription of DNA into RNA using the four ribonucleoside triphosphates as substrates. Component of RNA polymerase II which synthesizes mRNA precursors and many functional non-coding RNAs. Pol II is the central component of the basal RNA polymerase II transcription machinery. It is composed of mobile elements that move relative to each other. NRPB3 is part of the core element with the central large cleft and the clamp element that moves to open and close the cleft. Component of RNA polymerases IV and V which mediate short-interfering RNAs (siRNA) accumulation and subsequent RNA-directed DNA methylation-dependent (RdDM) transcriptional gene silencing (TGS) of endogenous repeated sequences, including transposable elements. In Arabidopsis thaliana (Mouse-ear cress), this protein is DNA-directed RNA polymerases II, IV and V subunit 3 (NRPB3).